We begin with the raw amino-acid sequence, 642 residues long: Tigger transposable element derived 5 (642 aa).

Residues 1-54 (MYPASPPAGPALHPVPHRARLPQPRCLAEPPRSPAPGPGSTARPPPPPAPGPRP) are disordered. Positions 31 to 53 (PRSPAPGPGSTARPPPPPAPGPR) are enriched in pro residues. Residues 57–108 (AVKMTFRKAYSIKDKLQAIERVKGGERQASVCRDFGVPGGTLRGWLKDEPKL) form the HTH psq-type domain. 2 consecutive DNA-binding regions (H-T-H motif) follow at residues 84–104 (QASVCRDFGVPGGTLRGWLKD) and 155–188 (PVIQAQAEAFARQIYGPECTFKASHGWFWRWQKR). Positions 122 to 195 (QRKKMRLANE…QKRHGISSQR (74 aa)) constitute an HTH CENPB-type domain. A disordered region spans residues 202–238 (SPVAGPAPVKEEPAQSPGAVLVPDGAPATLPHSEGGY). Residues 240 to 365 (DEQIYNANVT…CLQQKAVLLV (126 aa)) form the DDE-1 domain. Disordered regions lie at residues 375-400 (TSMPPLEESEETPRQCQPELLGSPEE) and 548-581 (GCREEVAPAAPPSPASLPSSIGAGEEEEEATEQG).

It belongs to the tigger transposable element derived protein family.

It localises to the nucleus. The sequence is that of Tigger transposable element derived 5 (Tigd5) from Mus musculus (Mouse).